Reading from the N-terminus, the 364-residue chain is DNA replication and repair protein RecF (364 aa).

Position 30 to 37 (30 to 37) interacts with ATP; it reads GNNGMGKT.

This sequence belongs to the RecF family.

The protein localises to the cytoplasm. In terms of biological role, the RecF protein is involved in DNA metabolism; it is required for DNA replication and normal SOS inducibility. RecF binds preferentially to single-stranded, linear DNA. It also seems to bind ATP. The sequence is that of DNA replication and repair protein RecF from Porphyromonas gingivalis (strain ATCC 33277 / DSM 20709 / CIP 103683 / JCM 12257 / NCTC 11834 / 2561).